Here is a 769-residue protein sequence, read N- to C-terminus: EEEVVISINSLGQLYFEHLQILHKQRAAKENEEEASVDTSQENQEDLGLWEEKFGKFVDIKANGPSSIGLDFSLHGFEHLYGIPQHAESHQLKNTGDEDAYRLYNLDVYGYQIYDKMGIYGSVPYLLAHKLGRTIGIFWLNASETLVEINTEPAVEYTLSQMGPVAAKQKVRSRTHVHWMSESGIIDVFLLTGPTPSDVFKQYSHLTGTQAMPPLFSLGYHQCRWNYEDEQDVKAVDAGFDEHDIPYDAMWLDIEHTEGKRYFTWDKKRFPNPERMQELLRSKKRKLVVISDPHIKIDPDYSVYVKAKDQGFFVKNQEGEDFEGVCWPGLSSYLDFTNPKVREWYSSLFAFPVYQGSTDILFLWNDMNEPSVFRRPEQTMQKNAIHHGNWEHRELHNIYGFYHQMATAEGLIQRSGGKERPFVLTRSFFAGSQKYGAVWTGDNTAEWSYLKISIPMLLTLSITGISFCGADIGGFIGNPETELLVRWYQAGAYQPFFRGHATMNAKRREPWLFGKEHTRLIREAIRERYGLLPYWYSLFYHAHVASQPVMRPLWVEFPDELKTFDMEDEYMLGSALLVHPVTEPKATTVDVFLPGSNEVWYDYKTFAHWEGGCTVKIPVALDTIPVFQRGGSVVPIKTTVGKSTGWMTESSYGLRVALSTKGSSVGELYLDDGHSFQYLHQKQFLHRKFSFCSSVLINSSADQRGHYPSKCVVEQILVLGLRKEPSFVTTHSSDGKDQPVAFTYCAKTSSLSLEKLSLNIATDWEVRII.

Catalysis depends on aspartate 366, which acts as the Nucleophile. The active site involves glutamate 369. The active-site Proton donor is aspartate 442.

The protein belongs to the glycosyl hydrolase 31 family.

The enzyme catalyses Hydrolysis of terminal, non-reducing (1-&gt;4)-linked alpha-D-glucose residues with release of alpha-D-glucose.. Has alpha-glucosidase activity. The polypeptide is Neutral alpha-glucosidase C (GANC) (Macaca fascicularis (Crab-eating macaque)).